Consider the following 98-residue polypeptide: Small ribosomal subunit protein eS24 (98 aa).

This sequence belongs to the eukaryotic ribosomal protein eS24 family.

In Thermococcus sibiricus (strain DSM 12597 / MM 739), this protein is Small ribosomal subunit protein eS24.